The primary structure comprises 482 residues: Glutamyl-tRNA(Gln) amidotransferase subunit A (482 aa).

Active-site charge relay system residues include Lys75 and Ser150. Ser174 functions as the Acyl-ester intermediate in the catalytic mechanism.

This sequence belongs to the amidase family. GatA subfamily. In terms of assembly, heterotrimer of A, B and C subunits.

It catalyses the reaction L-glutamyl-tRNA(Gln) + L-glutamine + ATP + H2O = L-glutaminyl-tRNA(Gln) + L-glutamate + ADP + phosphate + H(+). Functionally, allows the formation of correctly charged Gln-tRNA(Gln) through the transamidation of misacylated Glu-tRNA(Gln) in organisms which lack glutaminyl-tRNA synthetase. The reaction takes place in the presence of glutamine and ATP through an activated gamma-phospho-Glu-tRNA(Gln). This chain is Glutamyl-tRNA(Gln) amidotransferase subunit A, found in Deinococcus radiodurans (strain ATCC 13939 / DSM 20539 / JCM 16871 / CCUG 27074 / LMG 4051 / NBRC 15346 / NCIMB 9279 / VKM B-1422 / R1).